A 98-amino-acid chain; its full sequence is NADH-ubiquinone oxidoreductase chain 4L (98 aa).

Transmembrane regions (helical) follow at residues 1–21 (MMPISLSLTMAFSLALAGTLI), 28–48 (STLLCLEGMMLSLFILMAMLI), and 59–79 (APLILLVFSACEAGIGLALLV).

This sequence belongs to the complex I subunit 4L family. Core subunit of respiratory chain NADH dehydrogenase (Complex I) which is composed of 45 different subunits.

It is found in the mitochondrion inner membrane. It carries out the reaction a ubiquinone + NADH + 5 H(+)(in) = a ubiquinol + NAD(+) + 4 H(+)(out). Functionally, core subunit of the mitochondrial membrane respiratory chain NADH dehydrogenase (Complex I) which catalyzes electron transfer from NADH through the respiratory chain, using ubiquinone as an electron acceptor. Part of the enzyme membrane arm which is embedded in the lipid bilayer and involved in proton translocation. The polypeptide is NADH-ubiquinone oxidoreductase chain 4L (MT-ND4L) (Petaurus breviceps (Australian sugar glider)).